The primary structure comprises 168 residues: ATP synthase subunit b (168 aa).

Residues 10-30 traverse the membrane as a helical segment; that stretch reads STILGNFILVTASFAVLIILI.

It belongs to the ATPase B chain family. In terms of assembly, F-type ATPases have 2 components, F(1) - the catalytic core - and F(0) - the membrane proton channel. F(1) has five subunits: alpha(3), beta(3), gamma(1), delta(1), epsilon(1). F(0) has three main subunits: a(1), b(2) and c(10-14). The alpha and beta chains form an alternating ring which encloses part of the gamma chain. F(1) is attached to F(0) by a central stalk formed by the gamma and epsilon chains, while a peripheral stalk is formed by the delta and b chains.

The protein localises to the cell membrane. Functionally, f(1)F(0) ATP synthase produces ATP from ADP in the presence of a proton or sodium gradient. F-type ATPases consist of two structural domains, F(1) containing the extramembraneous catalytic core and F(0) containing the membrane proton channel, linked together by a central stalk and a peripheral stalk. During catalysis, ATP synthesis in the catalytic domain of F(1) is coupled via a rotary mechanism of the central stalk subunits to proton translocation. Its function is as follows. Component of the F(0) channel, it forms part of the peripheral stalk, linking F(1) to F(0). The sequence is that of ATP synthase subunit b from Streptococcus suis (strain 98HAH33).